We begin with the raw amino-acid sequence, 878 residues long: Phosphoenolpyruvate carboxylase (878 aa).

Residues histidine 140 and lysine 545 contribute to the active site.

It belongs to the PEPCase type 1 family. The cofactor is Mg(2+).

It catalyses the reaction oxaloacetate + phosphate = phosphoenolpyruvate + hydrogencarbonate. Functionally, forms oxaloacetate, a four-carbon dicarboxylic acid source for the tricarboxylic acid cycle. The chain is Phosphoenolpyruvate carboxylase from Pseudomonas paraeruginosa (strain DSM 24068 / PA7) (Pseudomonas aeruginosa (strain PA7)).